We begin with the raw amino-acid sequence, 219 residues long: Transmembrane protein 179B (219 aa).

The next 4 membrane-spanning stretches (helical) occupy residues 9–29 (VELA…AAMT), 65–85 (FVAG…LFWI), 96–116 (GAIG…LVLV), and 167–187 (TSSW…VVQW). The interval 198–219 (ERGDPEWSSETDALVGSRLSHS) is disordered. Residues Ser206 and Ser214 each carry the phosphoserine modification.

Belongs to the TMEM179 family.

The protein localises to the membrane. The chain is Transmembrane protein 179B (TMEM179B) from Homo sapiens (Human).